The sequence spans 663 residues: Protein THEMIS2 (663 aa).

CABIT stretches follow at residues 2–237 and 238–515; these read EPVP…TASS and QHIH…EAEG. The interval 545–663 is disordered; the sequence is ASESQAPPPR…DMDDHDYEEI (119 aa). Over residues 559–577 the composition is skewed to polar residues; sequence QGINKKQQNIQSCKESSVK. The residue at position 596 (Thr-596) is a Phosphothreonine. A compositionally biased stretch (polar residues) spans 621 to 641; sequence NPQTQNSVLSMKPKTSSSLGK. Residues 653 to 663 are compositionally biased toward acidic residues; that stretch reads PDMDDHDYEEI. The residue at position 660 (Tyr-660) is a Phosphotyrosine.

It belongs to the themis family. As to quaternary structure, interacts with VAV1. Interacts with LAT. Interacts constitutively with GRB2, LYN and PLCG2; these interactions increase the activation of PLCG2 and its downstream pathways following B cell receptor stimulation. Phosphorylation at Tyr-660 is induced by LPS. Phosphorylated by Src kinases (Lck or Fyn) following BCR engagement. As to expression, expressed in both developing and mature B-cells with high expression in immature, follicular and B1 B cells. Also expressed in macrophages and dendritic cells. Down-regulated in splenocytes of mice developing arthritis in a collagen-induced model, not in those of mice failing to develop the disease. Transiently down-regulated in splenocytes of mice infected with influenza virus.

It localises to the nucleus. The protein localises to the cytoplasm. Its function is as follows. May constitute a control point in macrophage inflammatory response, promoting LPS-induced TLR4-mediated TNF production. Determines the threshold for activation of B cells by low-affinity and low-avidity ligands via PLCG2 activation and its downstream pathways. This is Protein THEMIS2 from Mus musculus (Mouse).